The primary structure comprises 196 residues: Probable malonic semialdehyde reductase RutE (196 aa).

The protein belongs to the nitroreductase family. HadB/RutE subfamily. Requires FMN as cofactor.

It catalyses the reaction 3-hydroxypropanoate + NADP(+) = 3-oxopropanoate + NADPH + H(+). Functionally, may reduce toxic product malonic semialdehyde to 3-hydroxypropionic acid, which is excreted. This Escherichia coli O139:H28 (strain E24377A / ETEC) protein is Probable malonic semialdehyde reductase RutE.